Consider the following 182-residue polypeptide: Capsid protein (182 aa).

A disordered region spans residues 1–25 (MSSAAQPMSRRARRRAARRALGSQP).

It is found in the virion. Its function is as follows. Capsid protein self-assembles to form a quasi-spherical capsid, about 26 nm, or bacilliform. The chain is Capsid protein from Olive latent virus 2 (isolate Italy) (OLV-2).